Here is a 253-residue protein sequence, read N- to C-terminus: uncharacterized protein (253 aa).

EamA domains follow at residues Met1–Leu97 and Phe116–Leu237. The next 8 membrane-spanning stretches (helical) occupy residues Phe2 to Leu22, Ile28 to Tyr48, Glu53 to Leu73, Thr80 to Gly100, Ile101 to Phe121, Ala138 to Phe158, Ile162 to Leu182, and Gly214 to Ile234.

The protein belongs to the EamA transporter family.

It is found in the cell membrane. This is an uncharacterized protein from Acidianus ambivalens (Desulfurolobus ambivalens).